A 634-amino-acid polypeptide reads, in one-letter code: Sodium-dependent multivitamin transporter (634 aa).

The next 12 helical transmembrane spans lie at 23 to 43 (FSVV…VIGL), 65 to 85 (MGCL…VAIL), 100 to 120 (FLGC…IPVF), 142 to 162 (ICGT…ALYA), 175 to 195 (LWLS…LGGL), 207 to 227 (LVMF…VGGL), 255 to 275 (FWTL…VNQA), 295 to 315 (AVFP…LVMF), 350 to 370 (LPGL…SSAF), 403 to 423 (FAYG…GSVL), 427 to 447 (LSIF…GLFF), and 455 to 475 (AIVG…GSIV). N-linked (GlcNAc...) asparagine glycosylation is found at N488 and N497. A helical transmembrane segment spans residues 526–546 (LWYSAHNSTTVIVVGLIVSLL).

Belongs to the sodium:solute symporter (SSF) (TC 2.A.21) family. Interacts with PDZD11. Expressed in the intestinal mucosa, liver and kidney (at protein level). Expressed in the colon.

It localises to the cell membrane. It is found in the apical cell membrane. It catalyses the reaction biotin(out) + 2 Na(+)(out) = biotin(in) + 2 Na(+)(in). It carries out the reaction (R)-pantothenate(out) + 2 Na(+)(out) = (R)-pantothenate(in) + 2 Na(+)(in). The enzyme catalyses (R)-lipoate(out) + 2 Na(+)(out) = (R)-lipoate(in) + 2 Na(+)(in). The catalysed reaction is iodide(out) + 2 Na(+)(out) = iodide(in) + 2 Na(+)(in). In terms of biological role, sodium-dependent multivitamin transporter that mediates the electrogenic transport of pantothenate, biotin, lipoate and iodide. Functions as a Na(+)-coupled substrate symporter where the stoichiometry of Na(+):substrate is 2:1, creating an electrochemical Na(+) gradient used as driving force for substrate uptake. Required for biotin and pantothenate uptake in the intestine across the brush border membrane. Plays a role in the maintenance of intestinal mucosa integrity, by providing the gut mucosa with biotin. Contributes to the luminal uptake of biotin and pantothenate into the brain across the blood-brain barrier. The chain is Sodium-dependent multivitamin transporter from Mus musculus (Mouse).